Consider the following 366-residue polypeptide: Methylthioribose-1-phosphate isomerase (366 aa).

The Proton donor role is filled by Asp-260.

This sequence belongs to the eIF-2B alpha/beta/delta subunits family. MtnA subfamily.

It localises to the cytoplasm. The protein localises to the nucleus. It carries out the reaction 5-(methylsulfanyl)-alpha-D-ribose 1-phosphate = 5-(methylsulfanyl)-D-ribulose 1-phosphate. The protein operates within amino-acid biosynthesis; L-methionine biosynthesis via salvage pathway; L-methionine from S-methyl-5-thio-alpha-D-ribose 1-phosphate: step 1/6. Catalyzes the interconversion of methylthioribose-1-phosphate (MTR-1-P) into methylthioribulose-1-phosphate (MTRu-1-P). The polypeptide is Methylthioribose-1-phosphate isomerase (Caenorhabditis briggsae).